A 346-amino-acid chain; its full sequence is NADH-quinone oxidoreductase subunit H (346 aa).

A run of 8 helical transmembrane segments spans residues 6–26 (ILFW…ACAY), 76–96 (IMYL…WSVV), 128–148 (ILFL…AGWA), 166–186 (ISYE…TGSL), 198–218 (LWNI…VAMF), 260–280 (ITMS…PFGI), 289–309 (LFGL…FVWV), and 324–344 (LGWK…SLYI).

It belongs to the complex I subunit 1 family. As to quaternary structure, NDH-1 is composed of 14 different subunits. Subunits NuoA, H, J, K, L, M, N constitute the membrane sector of the complex.

The protein resides in the cell inner membrane. It carries out the reaction a quinone + NADH + 5 H(+)(in) = a quinol + NAD(+) + 4 H(+)(out). NDH-1 shuttles electrons from NADH, via FMN and iron-sulfur (Fe-S) centers, to quinones in the respiratory chain. The immediate electron acceptor for the enzyme in this species is believed to be ubiquinone. Couples the redox reaction to proton translocation (for every two electrons transferred, four hydrogen ions are translocated across the cytoplasmic membrane), and thus conserves the redox energy in a proton gradient. This subunit may bind ubiquinone. In Leptospira borgpetersenii serovar Hardjo-bovis (strain JB197), this protein is NADH-quinone oxidoreductase subunit H.